Consider the following 200-residue polypeptide: MPIGVPKVPFRLPGEEDAVWVDVYNRLYRERLLFLGQQVDDEIANQLIGIMMYLNSEDQAKDMYLYVNSPGGAVLAGISVYDAMQFVVPDVHTICMGLAASMGSFILAGGEITRRIALPHARVMIHQPASSYYDGQAGECVMEAEEVLKLRDCITKVYAQRTGKPLWLISEDMERDVFLSAEEAQDYGVVDLVAVENVSR.

Catalysis depends on S101, which acts as the Nucleophile. The active site involves H126.

This sequence belongs to the peptidase S14 family. Component of the chloroplastic Clp protease core complex.

Its subcellular location is the plastid. It is found in the chloroplast stroma. It catalyses the reaction Hydrolysis of proteins to small peptides in the presence of ATP and magnesium. alpha-casein is the usual test substrate. In the absence of ATP, only oligopeptides shorter than five residues are hydrolyzed (such as succinyl-Leu-Tyr-|-NHMec, and Leu-Tyr-Leu-|-Tyr-Trp, in which cleavage of the -Tyr-|-Leu- and -Tyr-|-Trp bonds also occurs).. In terms of biological role, cleaves peptides in various proteins in a process that requires ATP hydrolysis. Has a chymotrypsin-like activity. Plays a major role in the degradation of misfolded proteins. The polypeptide is ATP-dependent Clp protease proteolytic subunit (Adiantum capillus-veneris (Maidenhair fern)).